The primary structure comprises 973 residues: NLR family member X1 (973 aa).

The transit peptide at 1-84 (MRWGCHLPRT…EAIQRHRRNL (84 aa)) directs the protein to the mitochondrion. The tract at residues 73–554 (ATEAIQRHRR…RILPLLFNLL (482 aa)) is required for interaction with MAVS. The region spanning 158-481 (QTVVLYGTVG…LRFFLAPCVE (324 aa)) is the NACHT domain. Residue 164-171 (GTVGTGKS) coordinates ATP. The required for the repression of MAVS-induced interferon signaling stretch occupies residues 554 to 972 (LKVVPRVFGR…TLLEQLGGSG (419 aa)). Residues 665–692 (RQVLPPSELLDHLFFHYEFQNQRFSAEV) form the LRRNT domain. LRR repeat units follow at residues 693–716 (LGSL…VVAS), 722–745 (RHPL…TLMP), 747–775 (LLRA…LLHD), 776–799 (QCQI…VLMD), 809–832 (HLSL…LDRN), 833–855 (KQLQ…ALAK), 856–875 (AARK…ELSS), and 876–897 (EGRQ…VVAS). Positions 904–968 (VSEYWSVILS…SEVKTLLEQL (65 aa)) constitute an LRRCT domain.

The protein belongs to the NLRP family. In terms of assembly, homohexamer. Interacts with MAVS. Interacts with TUFM.

The protein localises to the mitochondrion outer membrane. Participates in antiviral signaling. Acts as a negative regulator of MAVS-mediated antiviral responses, through the inhibition of the virus-induced RLH (RIG-like helicase)-MAVS interaction. Instead, promotes autophagy by interacting with TUFM and subsequently recruiting the autophagy-related proteins ATG5 and ATG12. Also regulates MAVS-dependent NLRP3 inflammasome activation to attenuate apoptosis. Has no inhibitory function on NF-kappa-B signaling pathway, but enhances NF-kappa-B and JUN N-terminal kinase dependent signaling through the production of reactive oxygen species. Regulates viral mediated-inflammation and energy metabolism in a sex-dependent manner. In females, prevents uncontrolled inflammation and energy metabolism and thus, may contribute to the sex differences observed in infectious and inflammatory diseases. This Rattus norvegicus (Rat) protein is NLR family member X1 (Nlrx1).